The primary structure comprises 241 residues: Thymidylate kinase (241 aa).

17-24 is a binding site for ATP; it reads GGEGAGKT.

This sequence belongs to the thymidylate kinase family.

The enzyme catalyses dTMP + ATP = dTDP + ADP. Its function is as follows. Phosphorylation of dTMP to form dTDP in both de novo and salvage pathways of dTTP synthesis. The sequence is that of Thymidylate kinase from Thermosynechococcus vestitus (strain NIES-2133 / IAM M-273 / BP-1).